The chain runs to 354 residues: Dual-specificity RNA methyltransferase RlmN (354 aa).

Glu-86 functions as the Proton acceptor in the catalytic mechanism. Residues 105 to 338 (RHARYTICVS…CTIRQSKGLD (234 aa)) form the Radical SAM core domain. An intrachain disulfide couples Cys-112 to Cys-343. Cys-119, Cys-123, and Cys-126 together coordinate [4Fe-4S] cluster. Residues 169-170 (GE), Ser-201, 224-226 (SLH), and Asn-300 contribute to the S-adenosyl-L-methionine site. The S-methylcysteine intermediate role is filled by Cys-343.

This sequence belongs to the radical SAM superfamily. RlmN family. The cofactor is [4Fe-4S] cluster.

It is found in the cytoplasm. The catalysed reaction is adenosine(2503) in 23S rRNA + 2 reduced [2Fe-2S]-[ferredoxin] + 2 S-adenosyl-L-methionine = 2-methyladenosine(2503) in 23S rRNA + 5'-deoxyadenosine + L-methionine + 2 oxidized [2Fe-2S]-[ferredoxin] + S-adenosyl-L-homocysteine. It carries out the reaction adenosine(37) in tRNA + 2 reduced [2Fe-2S]-[ferredoxin] + 2 S-adenosyl-L-methionine = 2-methyladenosine(37) in tRNA + 5'-deoxyadenosine + L-methionine + 2 oxidized [2Fe-2S]-[ferredoxin] + S-adenosyl-L-homocysteine. Its function is as follows. Specifically methylates position 2 of adenine 2503 in 23S rRNA and position 2 of adenine 37 in tRNAs. m2A2503 modification seems to play a crucial role in the proofreading step occurring at the peptidyl transferase center and thus would serve to optimize ribosomal fidelity. The protein is Dual-specificity RNA methyltransferase RlmN of Campylobacter fetus subsp. fetus (strain 82-40).